A 611-amino-acid polypeptide reads, in one-letter code: Rho-related BTB domain-containing protein 3 (611 aa).

The interval 1-175 (MSIHIVALGN…KELGATYLEL (175 aa)) is rho-like. BTB domains follow at residues 254–356 (VDVV…QWEE) and 420–487 (ADVV…CPAG). Positions 420–611 (ADVVFEIQGT…HSRKCRCLVM (192 aa)) are interaction with Rab9.

In terms of assembly, interacts with RAB9A and RAB9B (at lower level compared to RAB9A-binding). Interacts with M6PRBP1/TIP47. Ubiquitous. Highly expressed in neural and cardiac tissues, pancreas, placenta and testis.

It is found in the golgi apparatus. Its function is as follows. Rab9-regulated ATPase required for endosome to Golgi transport. Involved in transport vesicle docking at the Golgi complex, possibly by participating in release M6PRBP1/TIP47 from vesicles to permit their efficient docking and fusion at the Golgi. Specifically binds Rab9, but not other Rab proteins. Has low intrinsic ATPase activity due to autoinhibition, which is relieved by Rab9. The protein is Rho-related BTB domain-containing protein 3 (RHOBTB3) of Homo sapiens (Human).